Reading from the N-terminus, the 217-residue chain is Nuclear transcription factor Y subunit C-3 (217 aa).

Over residues 1-28 (MDQQGQSSAMNYGSNPYQTNAMTTTPTG) the composition is skewed to polar residues. Disordered regions lie at residues 1-29 (MDQQ…PTGS) and 198-217 (PYMG…DPDN).

This sequence belongs to the NFYC/HAP5 subunit family. As to quaternary structure, heterotrimeric transcription factor composed of three components, NF-YA, NF-YB and NF-YC. NF-YB and NF-YC must interact and dimerize for NF-YA association and DNA binding. Ubiquitous.

It is found in the nucleus. Stimulates the transcription of various genes by recognizing and binding to a CCAAT motif in promoters. This is Nuclear transcription factor Y subunit C-3 (NFYC3) from Arabidopsis thaliana (Mouse-ear cress).